A 60-amino-acid polypeptide reads, in one-letter code: Large ribosomal subunit protein uL30 (60 aa).

Belongs to the universal ribosomal protein uL30 family. In terms of assembly, part of the 50S ribosomal subunit.

This chain is Large ribosomal subunit protein uL30, found in Streptomyces filamentosus (Streptomyces roseosporus).